Here is a 541-residue protein sequence, read N- to C-terminus: AT-rich interactive domain-containing protein 3A (541 aa).

The disordered stretch occupies residues 17–172 (RLQQELEARQ…KHPNPQAFPT (156 aa)). Residues 55–73 (LKIQRAQAAALAAMRAAAA) are compositionally biased toward low complexity. Positions 84-102 (SDEEEEDGESMASDEEDEK) are enriched in acidic residues. A compositionally biased stretch (basic and acidic residues) spans 103-112 (ERDGESERYP). Over residues 115 to 144 (GSEEEDLKGKWDEDDFEDEGEEDDYEDMEE) the composition is skewed to acidic residues. In terms of domain architecture, ARID spans 212–304 (DPKRKEFLDD…YLYPYECEKR (93 aa)). One can recognise an REKLES domain in the interval 407 to 501 (AALEQLREKL…GVLFAQPPTS (95 aa)). The tract at residues 408–450 (ALEQLREKLESGEPPEKKMALGTEEQQRLQRAIQHNLLAMTAQ) is important for nuclear localization. The tract at residues 452–473 (PMNIRINSQAEGRQDSAVNLTT) is homodimerization. An important for cytoplasmic localization region spans residues 497 to 504 (QPPTSASG). The tract at residues 499 to 541 (PTSASGTSKGSSNRTGSIGGGSSTSQAAPPPAPSAPTSNNPSP) is disordered.

As to quaternary structure, homodimer.

Its subcellular location is the nucleus. The protein resides in the cytoplasm. Its function is as follows. Transcription factor required for smad1 and smad2-mediated responses to TGFbeta during mesoderm induction. This chain is AT-rich interactive domain-containing protein 3A (arid3a), found in Xenopus tropicalis (Western clawed frog).